A 150-amino-acid chain; its full sequence is MVYWIIIMSTFVLDQLTKARAEKFFVDSPVNLLGGILSLTYVQNRGGAFSILEGKRRFFIIVSIILILFLCYMIFKSTSNLYKFSFSLIVGGAIGNLFDRIVKGYVVDFIDIKVIPVFNLADFFITGGVLLLTFLILKEGGEELFLKKKP.

The next 2 membrane-spanning stretches (helical) occupy residues 58 to 78 (FFIIVSIILILFLCYMIFKST) and 85 to 107 (SFSLIVGGAIGNLFDRIVKGYVV). Residues Asp108 and Asp122 contribute to the active site. Residues 117–137 (VFNLADFFITGGVLLLTFLIL) form a helical membrane-spanning segment.

The protein belongs to the peptidase A8 family.

It localises to the cell membrane. The enzyme catalyses Release of signal peptides from bacterial membrane prolipoproteins. Hydrolyzes -Xaa-Yaa-Zaa-|-(S,diacylglyceryl)Cys-, in which Xaa is hydrophobic (preferably Leu), and Yaa (Ala or Ser) and Zaa (Gly or Ala) have small, neutral side chains.. It participates in protein modification; lipoprotein biosynthesis (signal peptide cleavage). This protein specifically catalyzes the removal of signal peptides from prolipoproteins. The sequence is that of Lipoprotein signal peptidase from Caldicellulosiruptor bescii (strain ATCC BAA-1888 / DSM 6725 / KCTC 15123 / Z-1320) (Anaerocellum thermophilum).